The chain runs to 98 residues: Homeobox protein Ht-En (98 aa).

Positions 3 to 62 (EKRPRTAFTGDQLARLKREFSENKYLTEQRRTCLAKELNLNESQIKIWFQNKRAKMKKAS) form a DNA-binding region, homeobox. The interval 79–98 (NHSSSSSSSSSSSSSIFLLA) is disordered. Over residues 81–98 (SSSSSSSSSSSSSIFLLA) the composition is skewed to low complexity.

Belongs to the engrailed homeobox family. In terms of processing, phosphorylated in the Ser-rich domain.

Its subcellular location is the nucleus. Its function is as follows. This protein specifies the body segmentation pattern. The chain is Homeobox protein Ht-En (HT-EN) from Helobdella triserialis (Leech).